We begin with the raw amino-acid sequence, 339 residues long: Ribosomal RNA small subunit methyltransferase H (339 aa).

Residues 56 to 58 (GGH), Asp76, Phe102, Asp123, and Gln130 contribute to the S-adenosyl-L-methionine site. Disordered regions lie at residues 274–309 (RHSRGQYPEDENLPMPPQRPRYFSKPKRIAPSKAEV) and 320–339 (LRVATRTDTPYNTDPSPQHS). Over residues 325 to 339 (RTDTPYNTDPSPQHS) the composition is skewed to polar residues.

The protein belongs to the methyltransferase superfamily. RsmH family.

The protein localises to the cytoplasm. The catalysed reaction is cytidine(1402) in 16S rRNA + S-adenosyl-L-methionine = N(4)-methylcytidine(1402) in 16S rRNA + S-adenosyl-L-homocysteine + H(+). Functionally, specifically methylates the N4 position of cytidine in position 1402 (C1402) of 16S rRNA. The sequence is that of Ribosomal RNA small subunit methyltransferase H from Psychrobacter sp. (strain PRwf-1).